The chain runs to 91 residues: UPF0250 protein NMA1380 (91 aa).

It belongs to the UPF0250 family.

This is UPF0250 protein NMA1380 from Neisseria meningitidis serogroup A / serotype 4A (strain DSM 15465 / Z2491).